The primary structure comprises 77 residues: Putative antitoxin VapB3 (77 aa).

Belongs to the UPF0330 family.

Its function is as follows. Possibly the antitoxin component of a type II toxin-antitoxin (TA) system. Its cognate toxin is VapC3 (Potential). This chain is Putative antitoxin VapB3 (vapB3), found in Methanocaldococcus jannaschii (strain ATCC 43067 / DSM 2661 / JAL-1 / JCM 10045 / NBRC 100440) (Methanococcus jannaschii).